The primary structure comprises 189 residues: Ras-like protein rasG (189 aa).

Residue 10-17 (GGGGVGKS) coordinates GTP. The Effector region signature appears at 32 to 40 (YDPTIEDSY). GTP is bound by residues 57-61 (DTAGQ) and 116-119 (NKCD). A disordered region spans residues 169–189 (KGDSKPEKGKKKRPLKACTLL). Cysteine 186 carries the cysteine methyl ester modification. Cysteine 186 carries the S-geranylgeranyl cysteine lipid modification. The propeptide at 187–189 (TLL) is removed in mature form.

This sequence belongs to the small GTPase superfamily. Ras family. Interacts with ripA.

It is found in the cell membrane. The enzyme catalyses GTP + H2O = GDP + phosphate + H(+). With respect to regulation, alternates between an inactive form bound to GDP and an active form bound to GTP. Activated by a guanine nucleotide-exchange factor (GEF) and inactivated by a GTPase-activating protein (GAP). Ras proteins bind GDP/GTP and possess intrinsic GTPase activity. The sequence is that of Ras-like protein rasG (rasG) from Dictyostelium discoideum (Social amoeba).